The primary structure comprises 126 residues: uncharacterized protein (126 aa).

Residues 13–45 are disordered; sequence VAPKAGREEEQPPPPAGLGCGARGEPGRGPLEH.

The protein resides in the cytoplasm. It is found in the cytoskeleton. The protein localises to the cilium basal body. This is an uncharacterized protein from Homo sapiens (Human).